Consider the following 89-residue polypeptide: uncharacterized protein (89 aa).

The protein to M.jannaschii MJ1436.

This is an uncharacterized protein from Methanothermobacter thermautotrophicus (strain ATCC 29096 / DSM 1053 / JCM 10044 / NBRC 100330 / Delta H) (Methanobacterium thermoautotrophicum).